A 154-amino-acid chain; its full sequence is Small ribosomal subunit protein uS15 (154 aa).

Basic residues predominate over residues 1–10; it reads MARMHSRRRG. Residues 1–32 form a disordered region; that stretch reads MARMHSRRRGSSGSDRPTADEPPEWSEVDEDA. Residues 21 to 32 are compositionally biased toward acidic residues; sequence EPPEWSEVDEDA.

This sequence belongs to the universal ribosomal protein uS15 family. Part of the 30S ribosomal subunit.

In Natronomonas pharaonis (strain ATCC 35678 / DSM 2160 / CIP 103997 / JCM 8858 / NBRC 14720 / NCIMB 2260 / Gabara) (Halobacterium pharaonis), this protein is Small ribosomal subunit protein uS15.